The following is a 166-amino-acid chain: NAD(P)H-quinone oxidoreductase subunit I, chloroplastic (166 aa).

4Fe-4S ferredoxin-type domains are found at residues 55-84 (GRIH…VDWK) and 95-124 (LNYS…MTEE). Cys64, Cys67, Cys70, Cys74, Cys104, Cys107, Cys110, and Cys114 together coordinate [4Fe-4S] cluster.

It belongs to the complex I 23 kDa subunit family. As to quaternary structure, NDH is composed of at least 16 different subunits, 5 of which are encoded in the nucleus. It depends on [4Fe-4S] cluster as a cofactor.

The protein resides in the plastid. Its subcellular location is the chloroplast thylakoid membrane. It catalyses the reaction a plastoquinone + NADH + (n+1) H(+)(in) = a plastoquinol + NAD(+) + n H(+)(out). It carries out the reaction a plastoquinone + NADPH + (n+1) H(+)(in) = a plastoquinol + NADP(+) + n H(+)(out). NDH shuttles electrons from NAD(P)H:plastoquinone, via FMN and iron-sulfur (Fe-S) centers, to quinones in the photosynthetic chain and possibly in a chloroplast respiratory chain. The immediate electron acceptor for the enzyme in this species is believed to be plastoquinone. Couples the redox reaction to proton translocation, and thus conserves the redox energy in a proton gradient. This chain is NAD(P)H-quinone oxidoreductase subunit I, chloroplastic, found in Sigesbeckia blakei.